The chain runs to 249 residues: MSRIKLLLEYDGSNYHGFQLQKNANTVQAELEKAIYRLSGERATIVCAGRTDAGVHAWGQVVAFDSCSTIPGDRWAYALNSQLPEDIQVLESQETRAEFNPRFDALKKCYGYLIYRQKKKATFYRHYALCNTEPLKLEAMQEAAEILKGRQNFRSFCASGSSARTFEREIFHCRLSEKGPCLLLHIAADGFLYNMVRIITGTLLEVGKGKYPPQHLREIIASQDRTRAGPTAPPQGLYLLQVFYPEDSK.

Asp-52 functions as the Nucleophile in the catalytic mechanism. Position 110 (Tyr-110) interacts with substrate.

It belongs to the tRNA pseudouridine synthase TruA family. Homodimer.

It catalyses the reaction uridine(38/39/40) in tRNA = pseudouridine(38/39/40) in tRNA. Its function is as follows. Formation of pseudouridine at positions 38, 39 and 40 in the anticodon stem and loop of transfer RNAs. The chain is tRNA pseudouridine synthase A from Syntrophomonas wolfei subsp. wolfei (strain DSM 2245B / Goettingen).